Here is a 993-residue protein sequence, read N- to C-terminus: UPF0182 protein ROP_64500 (993 aa).

7 helical membrane-spanning segments follow: residues 18-38, 63-83, 114-134, 174-194, 211-231, 260-280, and 288-308; these read VLLV…RLIS, LLLF…ALLL, LFGL…AQSS, WLFV…YIFG, VQLA…YWFD, KLIL…AIFL, and MATA…PLVV. Residues 904-948 form a disordered region; that stretch reads TGSVATAPSAEEGTPPETGTTPPVEQGAAPPAPTAPATPPSGTDV. Residues 908 to 926 show a composition bias toward low complexity; sequence ATAPSAEEGTPPETGTTPP. Residues 933–942 show a composition bias toward pro residues; the sequence is PPAPTAPATP.

It belongs to the UPF0182 family.

It localises to the cell membrane. The chain is UPF0182 protein ROP_64500 from Rhodococcus opacus (strain B4).